The chain runs to 509 residues: Coiled-coil domain-containing protein 181 (509 aa).

Basic and acidic residues predominate over residues 46–82 (ENINQDLKENETVMEHTKRHSDPDKSLQDEVSPRRND). Disordered regions lie at residues 46-120 (ENIN…EEED) and 241-367 (PINN…EEKE). Composition is skewed to polar residues over residues 243-266 (NNAN…SVSG) and 300-334 (TCPS…STYC). The stretch at 335–375 (LSPRQKELQKQLEEKREKLKREEERRKIEEEKEKKRENDIV) forms a coiled coil. Basic and acidic residues predominate over residues 338–367 (RQKELQKQLEEKREKLKREEERRKIEEEKE).

Belongs to the CCDC181 family. Homodimer. Interacts with HOOK1. Interacts with HOOK2. Interacts with HOOK3.

The protein resides in the cytoplasm. It localises to the cytoskeleton. It is found in the cell projection. Its subcellular location is the cilium. The protein localises to the flagellum. Functionally, microtubule-binding protein that localizes to the microtubular manchette of elongating spermatids. This is Coiled-coil domain-containing protein 181 from Homo sapiens (Human).